Here is a 449-residue protein sequence, read N- to C-terminus: uncharacterized protein (449 aa).

One can recognise a TRAM domain in the interval Val3–Glu61. Cys74, Cys80, Cys83, and Cys161 together coordinate [4Fe-4S] cluster. Gln283, Tyr312, Glu333, and Asp378 together coordinate S-adenosyl-L-methionine. Cys405 (nucleophile) is an active-site residue.

It belongs to the class I-like SAM-binding methyltransferase superfamily. RNA M5U methyltransferase family.

This is an uncharacterized protein from Thermosynechococcus vestitus (strain NIES-2133 / IAM M-273 / BP-1).